A 938-amino-acid polypeptide reads, in one-letter code: Glutamate receptor ionotropic, NMDA 1 (938 aa).

Residues 1–18 form the signal peptide; sequence MSTMHLLTFALLFSCSFA. The Extracellular portion of the chain corresponds to 19–559; it reads RAACDPKIVN…TLDSFMQPFQ (541 aa). Residues asparagine 61, asparagine 203, asparagine 239, asparagine 276, asparagine 300, asparagine 350, asparagine 368, asparagine 440, asparagine 471, and asparagine 491 are each glycosylated (N-linked (GlcNAc...) asparagine). A disulfide bond links cysteine 79 and cysteine 308. Intrachain disulfides connect cysteine 420-cysteine 454 and cysteine 436-cysteine 455. Glycine is bound by residues proline 516, threonine 518, and arginine 523. A helical transmembrane segment spans residues 560-580; it reads STLWLLVGLSVHVVAVMLYLL. Residues 581–602 lie on the Cytoplasmic side of the membrane; it reads DRFSPFGRFKVNSEEEEEDALT. The discontinuously helical intramembrane region spans 603–624; it reads LSSAMWFSWGVLLNSGIGEGAP. Positions 603–624 are pore-forming; that stretch reads LSSAMWFSWGVLLNSGIGEGAP. Residues 625–630 lie on the Cytoplasmic side of the membrane; that stretch reads RSFSAR. A helical transmembrane segment spans residues 631–647; it reads ILGMVWAGFAMIIVASY. The Extracellular portion of the chain corresponds to 648–812; that stretch reads TANLAAFLVL…NAPATLTFEN (165 aa). Asparagine 674 carries N-linked (GlcNAc...) asparagine glycosylation. Positions 688 and 732 each coordinate glycine. Cysteine 744 and cysteine 798 are oxidised to a cystine. N-linked (GlcNAc...) asparagine glycosylation occurs at asparagine 771. Residues 813-833 traverse the membrane as a helical segment; sequence MAGVFMLVAGGIVAGIFLIFI. Residues 834-938 are Cytoplasmic-facing; the sequence is EIAYKRHKDA…LQLCSRHRES (105 aa). A Phosphoserine; by PKC modification is found at serine 889. The tract at residues 889-938 is disordered; the sequence is SSFKRRRSSKDTSTGGGRGALQNQKDTVLPRRAIEREEGQLQLCSRHRES. Phosphoserine is present on serine 890. Serine 896 and serine 897 each carry phosphoserine; by PKC. The segment covering 916 to 927 has biased composition (basic and acidic residues); the sequence is VLPRRAIEREEG.

This sequence belongs to the glutamate-gated ion channel (TC 1.A.10.1) family. NR1/GRIN1 subfamily. As to quaternary structure, heterotetramer; the NMDAR subunits are modular and harbor tiered domains that function in concert to regulate opening and closing of the cation-selective ion channel pore. Forms heterotetrameric channels composed of two GluN1/zeta subunits (GRIN1), and two identical GluN2/epsilon subunits (GRIN2A, GRIN2B, GRIN2C or GRIN2D) or GluN3 subunits (GRIN3A or GRIN3B) (in vitro). Can also form heterotetrameric channels that contain at least two GluN1 subunits and at least two different GluN2 subunits (or a combination of one GluN2 and one GluN3 subunits) (in vitro). In vivo, the subunit composition may vary in function of the expression levels of the different subunits. Found in a complex with GRIN2A or GRIN2B, GRIN3A and PPP2CB. Found in a complex with GRIN2A or GRIN2B and GRIN3B. Interacts with SNX27 (via PDZ domain); the interaction is required for recycling to the plasma membrane when endocytosed and prevent degradation in lysosomes. Interacts with DLG4 and MPDZ. Interacts with LRFN1 and LRFN2. Interacts with MYZAP. Found in a complex with DLG4 and PRR7. Found in a complex with GRIN2B and PRR7. Interacts with PRR7; the interaction is reduced following NMDA receptor activity. Post-translationally, NMDA is probably regulated by C-terminal phosphorylation of an isoform of GRIN1 by PKC. Dephosphorylated on Ser-897 probably by protein phosphatase 2A (PPP2CB). Its phosphorylated state is influenced by the formation of the NMDAR-PPP2CB complex and the NMDAR channel activity. In terms of tissue distribution, detected in brain (at protein level). Detected in brain.

It is found in the cell membrane. The protein localises to the postsynaptic cell membrane. The protein resides in the postsynaptic density membrane. It localises to the synaptic cell membrane. It carries out the reaction Ca(2+)(in) = Ca(2+)(out). The enzyme catalyses Na(+)(in) = Na(+)(out). The catalysed reaction is K(+)(in) = K(+)(out). Its function is as follows. Component of N-methyl-D-aspartate (NMDA) receptors (NMDARs) that function as heterotetrameric, ligand-gated cation channels with high calcium permeability and voltage-dependent block by Mg(2+). NMDARs participate in synaptic plasticity for learning and memory formation by contributing to the long-term potentiation (LTP). Channel activation requires binding of the neurotransmitter L-glutamate to the GluN2 subunit, glycine or D-serine binding to the GluN1 subunit, plus membrane depolarization to eliminate channel inhibition by Mg(2+). NMDARs mediate simultaneously the potasium efflux and the influx of calcium and sodium. Each GluN2 or GluN3 subunit confers differential attributes to channel properties, including activation, deactivation and desensitization kinetics, pH sensitivity, Ca2(+) permeability, and binding to allosteric modulators. This Mus musculus (Mouse) protein is Glutamate receptor ionotropic, NMDA 1.